Reading from the N-terminus, the 78-residue chain is Putative membrane protein insertion efficiency factor (78 aa).

This sequence belongs to the UPF0161 family.

It is found in the cell inner membrane. In terms of biological role, could be involved in insertion of integral membrane proteins into the membrane. This chain is Putative membrane protein insertion efficiency factor, found in Prochlorococcus marinus (strain MIT 9301).